Consider the following 419-residue polypeptide: Copalyl diphosphate synthase 2, chloroplastic (419 aa).

Lysine 82 serves as a coordination point for substrate.

Belongs to the terpene synthase family. Tpsc subfamily. It depends on Mg(2+) as a cofactor. As to expression, ubiquitous expression in roots, stems, leaves and flowers.

It localises to the plastid. Its subcellular location is the chloroplast. The enzyme catalyses (2E,6E,10E)-geranylgeranyl diphosphate = (+)-copalyl diphosphate. Its pathway is secondary metabolite biosynthesis; terpenoid biosynthesis. In terms of biological role, involved in the biosynthesis of ent-kaurene diterpenoids natural products such as oridonin, miltiradiene, eriocalyxin B and nezukol, known to exhibit antitumor, anti-inflammatory and antibacterial activities. Catalyzes the conversion of (2E,6E,10E)-geranylgeranyl diphosphate (GGPP) to (+)-copalyl diphosphate ((+)-CPP). The chain is Copalyl diphosphate synthase 2, chloroplastic from Isodon rubescens (Rabdosia rubescens).